A 95-amino-acid polypeptide reads, in one-letter code: Small ribosomal subunit protein bS18 (95 aa).

This sequence belongs to the bacterial ribosomal protein bS18 family. Part of the 30S ribosomal subunit. Forms a tight heterodimer with protein bS6.

Functionally, binds as a heterodimer with protein bS6 to the central domain of the 16S rRNA, where it helps stabilize the platform of the 30S subunit. The protein is Small ribosomal subunit protein bS18 of Ehrlichia ruminantium (strain Gardel).